We begin with the raw amino-acid sequence, 376 residues long: Chaperone protein DnaJ (376 aa).

In terms of domain architecture, J spans 4–70 (DYYQILGVSK…QKRAAYDRFG (67 aa)). A CR-type zinc finger spans residues 139 to 217 (GVEKNISFSS…CHGLGRYHKQ (79 aa)). Residues cysteine 152, cysteine 155, cysteine 169, cysteine 172, cysteine 191, cysteine 194, cysteine 205, and cysteine 208 each contribute to the Zn(2+) site. 4 CXXCXGXG motif repeats span residues 152–159 (CDTCHGSG), 169–176 (CDACGGVG), 191–198 (CHKCQGNG), and 205–212 (CKKCHGLG).

This sequence belongs to the DnaJ family. Homodimer. The cofactor is Zn(2+).

The protein resides in the cytoplasm. In terms of biological role, participates actively in the response to hyperosmotic and heat shock by preventing the aggregation of stress-denatured proteins and by disaggregating proteins, also in an autonomous, DnaK-independent fashion. Unfolded proteins bind initially to DnaJ; upon interaction with the DnaJ-bound protein, DnaK hydrolyzes its bound ATP, resulting in the formation of a stable complex. GrpE releases ADP from DnaK; ATP binding to DnaK triggers the release of the substrate protein, thus completing the reaction cycle. Several rounds of ATP-dependent interactions between DnaJ, DnaK and GrpE are required for fully efficient folding. Also involved, together with DnaK and GrpE, in the DNA replication of plasmids through activation of initiation proteins. This is Chaperone protein DnaJ from Rickettsia bellii (strain OSU 85-389).